Here is a 198-residue protein sequence, read N- to C-terminus: Probable nicotinate-nucleotide adenylyltransferase (198 aa).

It belongs to the NadD family.

The catalysed reaction is nicotinate beta-D-ribonucleotide + ATP + H(+) = deamido-NAD(+) + diphosphate. Its pathway is cofactor biosynthesis; NAD(+) biosynthesis; deamido-NAD(+) from nicotinate D-ribonucleotide: step 1/1. In terms of biological role, catalyzes the reversible adenylation of nicotinate mononucleotide (NaMN) to nicotinic acid adenine dinucleotide (NaAD). This chain is Probable nicotinate-nucleotide adenylyltransferase, found in Chlorobium phaeobacteroides (strain BS1).